A 422-amino-acid polypeptide reads, in one-letter code: L-cysteine:1D-myo-inositol 2-amino-2-deoxy-alpha-D-glucopyranoside ligase (422 aa).

Positions 1 to 34 (MKSWSTPAPPTVPSRPDRLRLHDTATGRTRHPGN) are disordered. Positions 15–25 (RPDRLRLHDTA) are enriched in basic and acidic residues. Cysteine 44 contacts Zn(2+). L-cysteinyl-5'-AMP contacts are provided by residues 44 to 47 (CGIT), threonine 59, and 82 to 84 (NVT). The short motif at 46–56 (ITPYDATHLGH) is the 'HIGH' region element. A 'ERGGDP' region motif is present at residues 196–201 (ERGGDP). Residue tryptophan 237 participates in L-cysteinyl-5'-AMP binding. Residue cysteine 241 coordinates Zn(2+). 259-261 (GSD) serves as a coordination point for L-cysteinyl-5'-AMP. Zn(2+) is bound at residue histidine 266. L-cysteinyl-5'-AMP is bound at residue valine 292. The short motif at 298–302 (KMSKS) is the 'KMSKS' region element.

The protein belongs to the class-I aminoacyl-tRNA synthetase family. MshC subfamily. Monomer. Requires Zn(2+) as cofactor.

It catalyses the reaction 1D-myo-inositol 2-amino-2-deoxy-alpha-D-glucopyranoside + L-cysteine + ATP = 1D-myo-inositol 2-(L-cysteinylamino)-2-deoxy-alpha-D-glucopyranoside + AMP + diphosphate + H(+). Catalyzes the ATP-dependent condensation of GlcN-Ins and L-cysteine to form L-Cys-GlcN-Ins. This is L-cysteine:1D-myo-inositol 2-amino-2-deoxy-alpha-D-glucopyranoside ligase from Micrococcus luteus (strain ATCC 4698 / DSM 20030 / JCM 1464 / CCM 169 / CCUG 5858 / IAM 1056 / NBRC 3333 / NCIMB 9278 / NCTC 2665 / VKM Ac-2230) (Micrococcus lysodeikticus).